We begin with the raw amino-acid sequence, 225 residues long: uncharacterized protein (225 aa).

Positions 69, 71, and 100 each coordinate a divalent metal cation.

Belongs to the FAH family.

This is an uncharacterized protein from Pyrococcus abyssi (strain GE5 / Orsay).